The chain runs to 337 residues: Ycf66-like protein (337 aa).

The segment at 111-337 (TEAELDQLEP…GADDQERFDY (227 aa)) is disordered. Over residues 113-123 (AELDQLEPEDE) the composition is skewed to acidic residues. Composition is skewed to basic and acidic residues over residues 133–143 (RGYDDDARSGR) and 253–269 (FGDRPERNAPRNARPYE). Residues 304-316 (QSRSGNPRSQRPS) are compositionally biased toward polar residues.

It belongs to the ycf66 family.

The protein is Ycf66-like protein of Synechocystis sp. (strain ATCC 27184 / PCC 6803 / Kazusa).